The following is a 173-amino-acid chain: Probable DNA-directed RNA polymerase subunit delta (173 aa).

Residues 14-81 (NSFIDLAYMA…GEYMWGLRDW (68 aa)) enclose the HTH HARE-type domain. Positions 113 to 173 (LLGEDEVEDE…DEFDDEEEEE (61 aa)) are disordered. The segment covering 115-173 (GEDEVEDELDLLPSDGDEENVDTEDEEVEDELDEAGLVVEPDEEFEDEEDEFDDEEEEE) has biased composition (acidic residues).

This sequence belongs to the RpoE family. As to quaternary structure, RNAP is composed of a core of 2 alpha, a beta and a beta' subunits. The core is associated with a delta subunit and one of several sigma factors.

Participates in both the initiation and recycling phases of transcription. In the presence of the delta subunit, RNAP displays an increased specificity of transcription, a decreased affinity for nucleic acids, and an increased efficiency of RNA synthesis because of enhanced recycling. This Macrococcus caseolyticus (strain JCSC5402) (Macrococcoides caseolyticum) protein is Probable DNA-directed RNA polymerase subunit delta.